We begin with the raw amino-acid sequence, 338 residues long: Ferrochelatase (338 aa).

Fe cation is bound by residues His189 and Glu294.

It belongs to the ferrochelatase family.

It localises to the cytoplasm. The catalysed reaction is heme b + 2 H(+) = protoporphyrin IX + Fe(2+). It participates in porphyrin-containing compound metabolism; protoheme biosynthesis; protoheme from protoporphyrin-IX: step 1/1. Functionally, catalyzes the ferrous insertion into protoporphyrin IX. The protein is Ferrochelatase of Pseudomonas putida (strain ATCC 47054 / DSM 6125 / CFBP 8728 / NCIMB 11950 / KT2440).